The following is a 474-amino-acid chain: Flotillin-like protein 3 (474 aa).

Cysteine 35 carries the S-palmitoyl cysteine lipid modification. Coiled-coil stretches lie at residues 235–255 (ENQR…KKAA) and 305–325 (QYET…KEAE).

The protein belongs to the band 7/mec-2 family. Flotillin subfamily. Post-translationally, may be palmitoylated. As to expression, expressed in all plant organs. Primarily expressed in vascular tissues. No change in spatial expression in root upon inoculation. Expression limited to the nodule vascular tissue.

It is found in the cell membrane. The protein localises to the membrane. It localises to the caveola. Its function is as follows. May act as a scaffolding protein within caveolar membranes, functionally participating in formation of caveolae or caveolae-like vesicles. May be involved in nodule formation. This Medicago truncatula (Barrel medic) protein is Flotillin-like protein 3 (FLOT3).